A 120-amino-acid chain; its full sequence is Protein EPIDERMAL PATTERNING FACTOR 2 (120 aa).

Residues Met1–Ser25 form the signal peptide. 4 cysteine pairs are disulfide-bonded: Cys76–Cys107, Cys80–Cys86, Cys83–Cys109, and Cys95–Cys101.

The protein belongs to the plant cysteine rich small secretory peptide family. Epidermal patterning factor subfamily. In terms of assembly, interacts with ERECTA, ERL1 and TMM. Expressed in leaves, especially by the MMCs and their early descendants cells (stomatal lineage cells) including guard mother cells (GMCs).

It localises to the secreted. In terms of biological role, controls stomatal patterning. Regulates the number of cells that enter, and remain in, the stomatal lineage by inhibiting protodermal cells from adopting the meristemoid mother cell (MMC) fate in a non-cell-autonomous manner. Mediates stomatal development inhibition. MEPF2: mobile signal controlling stomatal development in a non-cell-autonomous manner. Uses ERECTA as major receptor. Inactivated by cleavage by CRSP (AC Q9LNU1). May act by competing with somatogen (AC Q9SV72) for the same receptor, TMM (AC Q9SSD1). The sequence is that of Protein EPIDERMAL PATTERNING FACTOR 2 from Arabidopsis thaliana (Mouse-ear cress).